We begin with the raw amino-acid sequence, 136 residues long: Probable flagellum biosynthesis repressor protein FlbT 2 (136 aa).

This sequence belongs to the FlbT family.

In terms of biological role, has a post-transcriptional repressor function in flagellum biogenesis. Associates with the 5'-UTR of fljK mRNA and promotes its degradation. The sequence is that of Probable flagellum biosynthesis repressor protein FlbT 2 from Bradyrhizobium diazoefficiens (strain JCM 10833 / BCRC 13528 / IAM 13628 / NBRC 14792 / USDA 110).